The chain runs to 318 residues: MGTAIPEEPLGSTEKSIPLVGFGTVEYPLNEAFKERVLHAIKLGYRHFDTAASYPSEQPLGEALAEALRLGLVKSRDELFITSKLWLTDSYCGRVIPGLQKTLKTLGLEYLDLYLVHFPVSLIPEATYPVKPEDIRPFDYEGVWEEMEKCQELGLTKTIGVSNFTCKKLERLLATAKIPPAVNQVEMNPIWQQKKLREYCKEKGIHFSAFSPLGAVGTNWGHNRVMENEVLKQIAKAKGKTVAQVAIRWVYQQGVSVIVKSFNKERMEQNLDIFDWELSAEELQKIEQIPQYRGSRAEAYLSENGPFRTVEEIWDGEI.

Tyrosine 54 acts as the Proton donor in catalysis.

The protein belongs to the aldo/keto reductase family. In terms of tissue distribution, expressed in flowers, maturing fruits and in juice vesicles.

It carries out the reaction (1S)-1,7-diacetoxy-luvungin A + AH2 + H2O = (1R,2R,3S,8R,10R,11R,15S,16S)-3-(acetyloxy)-15-[(4R)-4-[(2S)-3,3-dimethyloxiran-2-yl]-1,4-dihydroxybutan-2-yl]-2,7,7,11,16-pentamethyl-5-oxo-6-oxatetracyclo[9.7.0.0(2,8).0(12,16)]octadec-12-en-10-yl acetate + acetate + A + H(+). Its pathway is secondary metabolite biosynthesis; terpenoid biosynthesis. Functionally, aldo-keto reductase involved in the biosynthesis of limonoids triterpene natural products such as limonin, a compound with insecticidal activity responsible for the bitter taste in citrus. Can use (1S)-1,7-diacetoxy-luvungin A as substrate. The protein is (1S)-1,7-diacetoxy-luvungin A aldo-keto reductase of Citrus sinensis (Sweet orange).